The chain runs to 364 residues: Aminomethyltransferase (364 aa).

Belongs to the GcvT family. As to quaternary structure, the glycine cleavage system is composed of four proteins: P, T, L and H.

It carries out the reaction N(6)-[(R)-S(8)-aminomethyldihydrolipoyl]-L-lysyl-[protein] + (6S)-5,6,7,8-tetrahydrofolate = N(6)-[(R)-dihydrolipoyl]-L-lysyl-[protein] + (6R)-5,10-methylene-5,6,7,8-tetrahydrofolate + NH4(+). In terms of biological role, the glycine cleavage system catalyzes the degradation of glycine. This is Aminomethyltransferase from Shewanella woodyi (strain ATCC 51908 / MS32).